Reading from the N-terminus, the 615-residue chain is Dihydroxy-acid dehydratase (615 aa).

Mg(2+) is bound at residue Asp81. Position 122 (Cys122) interacts with [2Fe-2S] cluster. Residues Asp123 and Lys124 each coordinate Mg(2+). Lys124 is modified (N6-carboxylysine). Cys195 is a [2Fe-2S] cluster binding site. Residue Glu491 participates in Mg(2+) binding. Ser517 (proton acceptor) is an active-site residue.

It belongs to the IlvD/Edd family. As to quaternary structure, homodimer. The cofactor is [2Fe-2S] cluster. It depends on Mg(2+) as a cofactor.

The enzyme catalyses (2R)-2,3-dihydroxy-3-methylbutanoate = 3-methyl-2-oxobutanoate + H2O. The catalysed reaction is (2R,3R)-2,3-dihydroxy-3-methylpentanoate = (S)-3-methyl-2-oxopentanoate + H2O. It functions in the pathway amino-acid biosynthesis; L-isoleucine biosynthesis; L-isoleucine from 2-oxobutanoate: step 3/4. Its pathway is amino-acid biosynthesis; L-valine biosynthesis; L-valine from pyruvate: step 3/4. Its function is as follows. Functions in the biosynthesis of branched-chain amino acids. Catalyzes the dehydration of (2R,3R)-2,3-dihydroxy-3-methylpentanoate (2,3-dihydroxy-3-methylvalerate) into 2-oxo-3-methylpentanoate (2-oxo-3-methylvalerate) and of (2R)-2,3-dihydroxy-3-methylbutanoate (2,3-dihydroxyisovalerate) into 2-oxo-3-methylbutanoate (2-oxoisovalerate), the penultimate precursor to L-isoleucine and L-valine, respectively. This chain is Dihydroxy-acid dehydratase, found in Novosphingobium aromaticivorans (strain ATCC 700278 / DSM 12444 / CCUG 56034 / CIP 105152 / NBRC 16084 / F199).